A 261-amino-acid polypeptide reads, in one-letter code: Small ribosomal subunit protein eS1z (261 aa).

Over residues M1 to K18 the composition is skewed to basic residues. The disordered stretch occupies residues M1 to A20.

It belongs to the eukaryotic ribosomal protein eS1 family. As to quaternary structure, component of the small ribosomal subunit. Mature ribosomes consist of a small (40S) and a large (60S) subunit. The 40S subunit contains about 33 different proteins and 1 molecule of RNA (18S). The 60S subunit contains about 49 different proteins and 3 molecules of RNA (25S, 5.8S and 5S).

The protein resides in the cytoplasm. This chain is Small ribosomal subunit protein eS1z, found in Vitis vinifera (Grape).